We begin with the raw amino-acid sequence, 155 residues long: Ribosome maturation factor RimP (155 aa).

Belongs to the RimP family.

The protein localises to the cytoplasm. In terms of biological role, required for maturation of 30S ribosomal subunits. This Hamiltonella defensa subsp. Acyrthosiphon pisum (strain 5AT) protein is Ribosome maturation factor RimP.